The following is a 685-amino-acid chain: Protein hook (685 aa).

Positions 6 to 122 constitute a Calponin-homology (CH) domain; it reads MEIYESLIRW…RLLQLILGCA (117 aa). The stretch at 134 to 570 forms a coiled coil; sequence QIMELEESLQ…LLAADSRYKK (437 aa). Disordered stretches follow at residues 430–449, 593–625, and 661–685; these read AAED…SSDV, LEKP…SGRV, and PGQS…FAKK. Over residues 602-623 the composition is skewed to low complexity; it reads ASSSSATGSGGDASTLTSTGSG. The span at 661-670 shows a compositional bias: polar residues; that stretch reads PGQSFLSRQR.

The protein belongs to the hook family. In terms of assembly, homodimer. Interacts with microtubules via its N-terminus.

Its subcellular location is the cytoplasm. The protein localises to the cytoskeleton. It localises to the endosome. Functionally, involved in endocytic trafficking. Probably acts as a cytoskeletal linker protein that tethers endosome vesicles to the cytoskeleton. This chain is Protein hook, found in Aedes aegypti (Yellowfever mosquito).